Reading from the N-terminus, the 305-residue chain is GMP synthase [glutamine-hydrolyzing] subunit B (305 aa).

Residues 2–184 (VKPEKFIPKA…LKLPDEICER (183 aa)) form the GMPS ATP-PPase domain. 29–35 (SGGVDSS) provides a ligand contact to ATP.

In terms of assembly, heterodimer composed of a glutamine amidotransferase subunit (A) and a GMP-binding subunit (B).

It carries out the reaction XMP + L-glutamine + ATP + H2O = GMP + L-glutamate + AMP + diphosphate + 2 H(+). It functions in the pathway purine metabolism; GMP biosynthesis; GMP from XMP (L-Gln route): step 1/1. In terms of biological role, catalyzes the synthesis of GMP from XMP. This is GMP synthase [glutamine-hydrolyzing] subunit B from Methanosarcina barkeri (strain Fusaro / DSM 804).